Here is a 302-residue protein sequence, read N- to C-terminus: N-acetylmuramic acid 6-phosphate etherase (302 aa).

Residues 58–221 enclose the SIS domain; it reads IFERFKKGGR…TTTLMIKLGK (164 aa). The active-site Proton donor is the Glu86. Glu117 is a catalytic residue.

The protein belongs to the GCKR-like family. MurNAc-6-P etherase subfamily. In terms of assembly, homodimer.

The enzyme catalyses N-acetyl-D-muramate 6-phosphate + H2O = N-acetyl-D-glucosamine 6-phosphate + (R)-lactate. It functions in the pathway amino-sugar metabolism; N-acetylmuramate degradation. Specifically catalyzes the cleavage of the D-lactyl ether substituent of MurNAc 6-phosphate, producing GlcNAc 6-phosphate and D-lactate. The polypeptide is N-acetylmuramic acid 6-phosphate etherase (Mycoplasma mycoides subsp. mycoides SC (strain CCUG 32753 / NCTC 10114 / PG1)).